A 507-amino-acid polypeptide reads, in one-letter code: RNA-splicing ligase RtcB homolog (507 aa).

5 residues coordinate Mn(2+): Asp-121, Cys-124, His-229, His-261, and His-355. Position 228–232 (228–232) interacts with GMP; the sequence is NHYAE. GMP-binding positions include 355 to 356, 404 to 407, Ser-411, 430 to 433, and Lys-506; these read HN, GGTM, and HGAG. His-430 acts as the GMP-histidine intermediate in catalysis.

It belongs to the RtcB family. Catalytic component of the tRNA-splicing ligase complex. The cofactor is Mn(2+).

The catalysed reaction is a 3'-end 3'-phospho-ribonucleotide-RNA + a 5'-end dephospho-ribonucleoside-RNA + GTP = a ribonucleotidyl-ribonucleotide-RNA + GMP + diphosphate. It carries out the reaction a 3'-end 2',3'-cyclophospho-ribonucleotide-RNA + a 5'-end dephospho-ribonucleoside-RNA + GTP + H2O = a ribonucleotidyl-ribonucleotide-RNA + GMP + diphosphate + H(+). Catalytic subunit of the tRNA-splicing ligase complex that acts by directly joining spliced tRNA halves to mature-sized tRNAs by incorporating the precursor-derived splice junction phosphate into the mature tRNA as a canonical 3',5'-phosphodiester. May act as an RNA ligase with broad substrate specificity, and may function toward other RNAs. This Branchiostoma floridae (Florida lancelet) protein is RNA-splicing ligase RtcB homolog.